Reading from the N-terminus, the 103-residue chain is MFRPFLNSLMLGSLFFPFIAIAGSTVQGGVIHFYGQIVEPACDVSTQSSPVEMNCPQNGSIPGKTYSSKALMSGNVKNAQIASVKVQYLDKQKKLAVMNIEYN.

A signal peptide spans 1–22; it reads MFRPFLNSLMLGSLFFPFIAIA.

This sequence to the N-terminal of the FimA/PapA family of fimbria proteins.

This is an uncharacterized protein from Escherichia coli (strain K12).